A 130-amino-acid chain; its full sequence is Small ribosomal subunit protein uS8 (130 aa).

Lys-88 bears the N6-succinyllysine mark.

It belongs to the universal ribosomal protein uS8 family. In terms of assembly, component of the small ribosomal subunit. Part of the small subunit (SSU) processome, composed of more than 70 proteins and the RNA chaperone small nucleolar RNA (snoRNA) U3.

Its subcellular location is the cytoplasm. It is found in the nucleus. The protein resides in the nucleolus. In terms of biological role, component of the small ribosomal subunit. The ribosome is a large ribonucleoprotein complex responsible for the synthesis of proteins in the cell. Part of the small subunit (SSU) processome, first precursor of the small eukaryotic ribosomal subunit. During the assembly of the SSU processome in the nucleolus, many ribosome biogenesis factors, an RNA chaperone and ribosomal proteins associate with the nascent pre-rRNA and work in concert to generate RNA folding, modifications, rearrangements and cleavage as well as targeted degradation of pre-ribosomal RNA by the RNA exosome. Required for proper erythropoiesis. In Mus musculus (Mouse), this protein is Small ribosomal subunit protein uS8 (Rps15a).